A 364-amino-acid chain; its full sequence is Succinyl-diaminopimelate desuccinylase (364 aa).

His64 lines the Zn(2+) pocket. Residue Asp66 is part of the active site. Asp95 provides a ligand contact to Zn(2+). Glu125 serves as the catalytic Proton acceptor. Positions 126, 154, and 339 each coordinate Zn(2+).

The protein belongs to the peptidase M20A family. DapE subfamily. Homodimer. Zn(2+) serves as cofactor. Co(2+) is required as a cofactor.

It carries out the reaction N-succinyl-(2S,6S)-2,6-diaminopimelate + H2O = (2S,6S)-2,6-diaminopimelate + succinate. The protein operates within amino-acid biosynthesis; L-lysine biosynthesis via DAP pathway; LL-2,6-diaminopimelate from (S)-tetrahydrodipicolinate (succinylase route): step 3/3. Functionally, catalyzes the hydrolysis of N-succinyl-L,L-diaminopimelic acid (SDAP), forming succinate and LL-2,6-diaminopimelate (DAP), an intermediate involved in the bacterial biosynthesis of lysine and meso-diaminopimelic acid, an essential component of bacterial cell walls. The chain is Succinyl-diaminopimelate desuccinylase from Nitratiruptor sp. (strain SB155-2).